The sequence spans 80 residues: Teretoxin Tsu6.5 (80 aa).

Residues 1–21 (MAINGRLLCLCLVLGLVFESL) form the signal peptide. Residues 22 to 42 (GHPSVQEKRAAEDSKPSGERR) constitute a propeptide that is removed on maturation.

The protein belongs to the teretoxin M (TM) superfamily. In terms of processing, contains 3 disulfide bonds. Expressed by the venom duct.

The protein localises to the secreted. The chain is Teretoxin Tsu6.5 from Terebra subulata (Chocolate spotted auger).